Consider the following 395-residue polypeptide: Lipid-A-disaccharide synthase (395 aa).

It belongs to the LpxB family.

It catalyses the reaction a lipid X + a UDP-2-N,3-O-bis[(3R)-3-hydroxyacyl]-alpha-D-glucosamine = a lipid A disaccharide + UDP + H(+). It participates in bacterial outer membrane biogenesis; LPS lipid A biosynthesis. In terms of biological role, condensation of UDP-2,3-diacylglucosamine and 2,3-diacylglucosamine-1-phosphate to form lipid A disaccharide, a precursor of lipid A, a phosphorylated glycolipid that anchors the lipopolysaccharide to the outer membrane of the cell. This chain is Lipid-A-disaccharide synthase, found in Bordetella avium (strain 197N).